Here is a 914-residue protein sequence, read N- to C-terminus: WAG22 antigen (914 aa).

Positions 1-93 constitute a PE domain; that stretch reads MSFVIAVPET…GGAYAAAEAA (93 aa). 2 disordered regions span residues 412–431 and 895–914; these read GGSGGAGGSGGPAGTAAGGA and AGAGGAGGLVLGRDGQHGLT. Residues 895–904 show a composition bias toward gly residues; sequence AGAGGAGGLV.

The protein belongs to the mycobacterial PE family. PGRS subfamily.

In Mycobacterium bovis (strain ATCC BAA-935 / AF2122/97), this protein is WAG22 antigen (wag22).